Here is a 114-residue protein sequence, read N- to C-terminus: MEGNMGFITITKPALKQIAILKNDHENDVHLRIGVRQGGCSGMSYSMNFEHVDKLKDTDERLRLDNFSVVCDPKSLLYLYGLSLDFSSELIGGGFQFSNPNASQTCGCGKSFSG.

Residues Cys-40, Cys-106, and Cys-108 each contribute to the Fe cation site.

This sequence belongs to the HesB/IscA family. Ycf83 subfamily.

The protein localises to the plastid. It localises to the chloroplast. This is an uncharacterized protein from Pyropia yezoensis (Susabi-nori).